The sequence spans 143 residues: Nucleoside diphosphate kinase (143 aa).

6 residues coordinate ATP: Lys-11, Phe-59, Arg-87, Thr-93, Arg-104, and Asn-114. His-117 acts as the Pros-phosphohistidine intermediate in catalysis.

It belongs to the NDK family. As to quaternary structure, homotetramer. Mg(2+) is required as a cofactor.

Its subcellular location is the cytoplasm. It carries out the reaction a 2'-deoxyribonucleoside 5'-diphosphate + ATP = a 2'-deoxyribonucleoside 5'-triphosphate + ADP. The enzyme catalyses a ribonucleoside 5'-diphosphate + ATP = a ribonucleoside 5'-triphosphate + ADP. Its function is as follows. Major role in the synthesis of nucleoside triphosphates other than ATP. The ATP gamma phosphate is transferred to the NDP beta phosphate via a ping-pong mechanism, using a phosphorylated active-site intermediate. The sequence is that of Nucleoside diphosphate kinase from Pseudoalteromonas translucida (strain TAC 125).